We begin with the raw amino-acid sequence, 164 residues long: T-cell surface glycoprotein CD3 zeta chain (164 aa).

The signal sequence occupies residues 1-21; it reads MKWKVSVLACILHVRFPGAEA. Glutamine 22 bears the Blocked amino end (Gln) mark. The Extracellular segment spans residues 22–30; sequence QSFGLLDPK. The chain crosses the membrane as a helical span at residues 31–51; the sequence is LCYLLDGILFIYGVIITALYL. Topologically, residues 52 to 164 are cytoplasmic; that stretch reads RAKFSRSAET…ALHMQTLAPR (113 aa). Residue serine 58 is modified to Phosphoserine. 3 ITAM domains span residues 61–89, 100–128, and 131–159; these read TAAN…LEKK, QQRR…EIGT, and ERRR…LHMQ. Tyrosine 72 and tyrosine 83 each carry phosphotyrosine. The segment covering 87–96 has biased composition (basic and acidic residues); it reads EKKRARDPEM. The segment at 87 to 111 is disordered; that stretch reads EKKRARDPEMGGKQQRRRNPQEGVY. A phosphotyrosine mark is found at tyrosine 111, tyrosine 123, tyrosine 142, and tyrosine 153. Positions 124–143 are disordered; sequence SEIGTKGERRRGKGHDGLYQ.

The protein belongs to the CD3Z/FCER1G family. In terms of assembly, the TCR-CD3 complex is composed of a CD3D/CD3E and a CD3G/CD3E heterodimers that preferentially associate with TCRalpha and TCRbeta, respectively, to form TCRalpha/CD3E/CD3G and TCRbeta/CD3G/CD3E trimers. In turn, the hexamer interacts with CD3Z homodimer to form the TCR-CD3 complex. Alternatively, TCRalpha and TCRbeta can be replaced by TCRgamma and TCRdelta. Interacts with SLA. Interacts with SLA2. Interacts with TRAT1. Interacts with DOCK2. Interacts with SHB. Interacts with ZAP70. Interacts (tyrosine phosphorylated) with SHC1 (via SH2 domain). Interacts with PTPRC. Interacts with CRK; this interaction regulates CD3Z phosphorylation. Interacts (on T cell side) with CD81, ICAM1 and CD9 at immunological synapses between antigen-presenting cells and T cells. Interacts with CD160. Interacts with LY6E. Interacts with LY6E. The signaling subunit of immunoglobulin gamma (IgG) Fc receptor complex. As a homodimer or a heterodimer with FCER1G, associates with the ligand binding subunit FCGR3A (via transmembrane domain); this interaction is a prerequisite for Fc receptor complex expression on the cell surface. Interacts with CD5. Phosphorylated on Tyr residues after T-cell receptor triggering by LCK in association with CD4/CD8. In terms of tissue distribution, CD3Z is expressed in normal lymphoid tissue and in peripheral blood mononuclear cells (PBMCs). Expressed also in retinal ganglion cells.

It is found in the cell membrane. In terms of biological role, part of the TCR-CD3 complex present on T-lymphocyte cell surface that plays an essential role in adaptive immune response. When antigen presenting cells (APCs) activate T-cell receptor (TCR), TCR-mediated signals are transmitted across the cell membrane by the CD3 chains CD3D, CD3E, CD3G and CD3Z. All CD3 chains contain immunoreceptor tyrosine-based activation motifs (ITAMs) in their cytoplasmic domain. Upon TCR engagement, these motifs become phosphorylated by Src family protein tyrosine kinases LCK and FYN, resulting in the activation of downstream signaling pathways. CD3Z ITAMs phosphorylation creates multiple docking sites for the protein kinase ZAP70 leading to ZAP70 phosphorylation and its conversion into a catalytically active enzyme. Plays an important role in intrathymic T-cell differentiation. Additionally, participates in the activity-dependent synapse formation of retinal ganglion cells (RGCs) in both the retina and dorsal lateral geniculate nucleus (dLGN). In Mus musculus (Mouse), this protein is T-cell surface glycoprotein CD3 zeta chain (Cd247).